The following is a 407-amino-acid chain: Probable succinyl-diaminopimelate desuccinylase (407 aa).

Histidine 72 contributes to the Zn(2+) binding site. Residue aspartate 74 is part of the active site. Residue aspartate 105 coordinates Zn(2+). Glutamate 139 functions as the Proton acceptor in the catalytic mechanism. Residues glutamate 140, glutamate 165, and histidine 378 each coordinate Zn(2+).

It belongs to the peptidase M20A family. The cofactor is Zn(2+). Co(2+) is required as a cofactor.

The enzyme catalyses N-succinyl-(2S,6S)-2,6-diaminopimelate + H2O = (2S,6S)-2,6-diaminopimelate + succinate. Its pathway is amino-acid biosynthesis; L-lysine biosynthesis via DAP pathway; LL-2,6-diaminopimelate from (S)-tetrahydrodipicolinate (succinylase route): step 3/3. In Staphylococcus aureus (strain MRSA252), this protein is Probable succinyl-diaminopimelate desuccinylase (dapE).